We begin with the raw amino-acid sequence, 101 residues long: uncharacterized protein (101 aa).

A run of 2 helical transmembrane segments spans residues 3–23 (IIGS…AIIF) and 68–88 (VIVL…IIVI).

The protein localises to the cell membrane. This is an uncharacterized protein from Ureaplasma parvum serovar 3 (strain ATCC 700970).